Consider the following 1323-residue polypeptide: ABC transporter gloK (1323 aa).

Helical transmembrane passes span 6–26, 102–122, 138–158, 217–237, 240–260, 325–345, and 359–379; these read AIAS…TLEA, PHAL…AGIL, VAYG…VMST, IWAS…RLGV, VAAV…VFGF, LLVG…VFAF, and PLLA…GQAV. An ABC transmembrane type-1 1 domain is found at 142–380; the sequence is LIAAYAIVYI…IFSLLGQAVS (239 aa). The ABC transporter 1 domain maps to 471-697; the sequence is IRDCSACWSK…SSYLESLGTR (227 aa). 503–510 is an ATP binding site; it reads GPIGSGKS. Helical transmembrane passes span 748 to 768, 795 to 815, 821 to 841, 859 to 879, 891 to 910, 976 to 996, and 1006 to 1026; these read GWVT…GLVF, YALW…WLMI, AAIQ…LVYF, LIDM…LSCI, YVAA…QLFY, LNLT…SIAL, and IGVA…LVYT. The ABC transmembrane type-1 2 domain maps to 752–1031; sequence WWVFVLLCSG…TLVYTWTSLE (280 aa). The 232-residue stretch at 1069 to 1300 folds into the ABC transporter 2 domain; sequence IRFQSVSAAY…PSFFASLLKA (232 aa). Residue 1103–1110 coordinates ATP; it reads GRTGSGKS.

It belongs to the ABC transporter superfamily. ABCC family. Conjugate transporter (TC 3.A.1.208) subfamily.

It localises to the cell membrane. Its function is as follows. 3-isopropylmalate dehydratase large subunit; part of the gene cluster that mediates the biosynthesis of pneumocandins, lipohexapeptides of the echinocandin family that prevent fungal cell wall formation by non-competitive inhibition of beta-1,3-glucan synthase. Possibly secretes antifungal pneumocandins, thus avoiding of intracellular accumulation and ameliorating the toxicity to the producing cells. The sequence is that of ABC transporter gloK from Glarea lozoyensis (strain ATCC 20868 / MF5171).